The following is a 330-amino-acid chain: Small ribosomal subunit protein uS15m (330 aa).

This sequence belongs to the universal ribosomal protein uS15 family. Component of the mitochondrial ribosome small subunit (28S) which comprises a 12S rRNA and about 30 distinct proteins.

It is found in the mitochondrion. The sequence is that of Small ribosomal subunit protein uS15m (mrps-15) from Caenorhabditis elegans.